We begin with the raw amino-acid sequence, 189 residues long: Hypoxanthine/guanine phosphoribosyltransferase (189 aa).

This sequence belongs to the purine/pyrimidine phosphoribosyltransferase family. Archaeal HPRT subfamily. As to quaternary structure, homodimer.

The protein resides in the cytoplasm. The enzyme catalyses IMP + diphosphate = hypoxanthine + 5-phospho-alpha-D-ribose 1-diphosphate. The catalysed reaction is GMP + diphosphate = guanine + 5-phospho-alpha-D-ribose 1-diphosphate. It functions in the pathway purine metabolism; IMP biosynthesis via salvage pathway; IMP from hypoxanthine: step 1/1. Catalyzes a salvage reaction resulting in the formation of IMP that is energically less costly than de novo synthesis. In Methanosarcina mazei (strain ATCC BAA-159 / DSM 3647 / Goe1 / Go1 / JCM 11833 / OCM 88) (Methanosarcina frisia), this protein is Hypoxanthine/guanine phosphoribosyltransferase.